Here is a 45-residue protein sequence, read N- to C-terminus: MSDKPDLSEVEKFDRSKLKKTNTEEKNTLPSKETIQQEKECVQTS.

Composition is skewed to basic and acidic residues over residues 1–27 and 35–45; these read MSDK…EEKN and IQQEKECVQTS. The tract at residues 1-45 is disordered; the sequence is MSDKPDLSEVEKFDRSKLKKTNTEEKNTLPSKETIQQEKECVQTS.

The protein belongs to the thymosin beta family. In terms of tissue distribution, neuroblastoma-specific.

The protein resides in the cytoplasm. It is found in the cytoskeleton. Functionally, plays an important role in the organization of the cytoskeleton. Binds to and sequesters actin monomers (G actin) and therefore inhibits actin polymerization. In Homo sapiens (Human), this protein is Thymosin beta-15A (TMSB15A).